Here is a 365-residue protein sequence, read N- to C-terminus: MSLTRLHIETFRNISLAQLDPGDGLNLIYGQNGSGKTSILEAIYFLGMGRSFRSHLSQRVIQHNDDKLTLFANLSVCEQESKIGLRRFRNGETEVKINGDNIKRLSTLAETLPIQVITPESFSLLFEGPKSRRQFIDWGAFHSDKSFHLAWANVRRILKQRNQLLKNQVSYSQIQYWDKELVRYSEQVTEIRKQYVDSLNEQLKGIIGEFLPLVEVKVSFTRGWDSKTDFGQLLETQYLRDVAAGNTGSGPHKADLRLRVGVLPVQDALSRGQLKLLVCALRIAQGKLLKQQTDKNSIYLVDDLPSELDAQHRKLLLQQLMDTGAQVFVTAIEPAAIVDSLATPPSKMFHVEQGCVTVIDKPTRE.

30–37 (GQNGSGKT) contributes to the ATP binding site.

The protein belongs to the RecF family.

It localises to the cytoplasm. The RecF protein is involved in DNA metabolism; it is required for DNA replication and normal SOS inducibility. RecF binds preferentially to single-stranded, linear DNA. It also seems to bind ATP. The chain is DNA replication and repair protein RecF from Shewanella halifaxensis (strain HAW-EB4).